The primary structure comprises 400 residues: Melanization protease 1 (400 aa).

Residues 1-22 (MEPHFFFTVLWMLLMGTSSTYA) form the signal peptide. Positions 23–137 (QEIFGYCRTP…PNCGENFGDR (115 aa)) are cleaved as a propeptide — activation peptide. One can recognise a Clip domain in the interval 28–91 (YCRTPDENSG…FCFTNVQICC (64 aa)). Disulfide bonds link Cys29–Cys90, Cys39–Cys70, and Cys45–Cys91. The segment at 98–120 (NQQPQWGNHPQPTQTTKPTKRSG) is disordered. 3 cysteine pairs are disulfide-bonded: Cys130–Cys268, Cys168–Cys184, and Cys210–Cys220. The Peptidase S1 domain occupies 138–399 (VVGGNETTKR…YLNWIENNVR (262 aa)). An N-linked (GlcNAc...) asparagine glycan is attached at Asn142. His183 (charge relay system) is an active-site residue. 4 residues coordinate Ca(2+): Glu201, Asp203, Thr206, and Asp209. Asp248 functions as the Charge relay system in the catalytic mechanism. Asn296 carries N-linked (GlcNAc...) asparagine glycosylation. Cystine bridges form between Cys315-Cys332 and Cys342-Cys375. The Charge relay system role is filled by Ser346.

It belongs to the peptidase S1 family. CLIP subfamily.

Functionally, serine protease which plays an essential role in the melanization immune response by acting downstream of sp7 to activate prophenoloxidase (PPO1). May function in diverse Hayan-dependent PPO1-activating cascades that are negatively controlled by different serpin proteins; Spn27A in the hemolymph and Spn77BA in the trachea. Regulation of melanization and PPO1 activation appears to be largely independent of the Toll signaling pathway. This is Melanization protease 1 from Drosophila melanogaster (Fruit fly).